The chain runs to 440 residues: Dihydrolipoyllysine-residue acetyltransferase component of pyruvate dehydrogenase complex (440 aa).

The Lipoyl-binding domain occupies 2-78 (SIEVKMPALS…AVGQVIAVMA (77 aa)). Lysine 43 is modified (N6-lipoyllysine). Residues 91 to 113 (ASSQISEPSEKADVAQKETADSE) are disordered. Basic and acidic residues predominate over residues 98–110 (PSEKADVAQKETA). The region spanning 149–186 (KASPLAKRLAKKNHVDLKQVNGSGPHGRIIKADIEAFI) is the Peripheral subunit-binding (PSBD) domain. Residues 192–202 (ASSNPSVSTPE) show a composition bias toward polar residues. The tract at residues 192–214 (ASSNPSVSTPEASGKITHDTPHN) is disordered. The active site involves histidine 412.

Belongs to the 2-oxoacid dehydrogenase family. Forms a 24-polypeptide structural core with octahedral symmetry. (R)-lipoate is required as a cofactor.

The enzyme catalyses N(6)-[(R)-dihydrolipoyl]-L-lysyl-[protein] + acetyl-CoA = N(6)-[(R)-S(8)-acetyldihydrolipoyl]-L-lysyl-[protein] + CoA. Its function is as follows. The pyruvate dehydrogenase complex catalyzes the overall conversion of pyruvate to acetyl-CoA and CO(2). It contains multiple copies of three enzymatic components: pyruvate dehydrogenase (E1), dihydrolipoamide acetyltransferase (E2) and lipoamide dehydrogenase (E3). This is Dihydrolipoyllysine-residue acetyltransferase component of pyruvate dehydrogenase complex (pdhC) from Zymomonas mobilis subsp. mobilis (strain ATCC 31821 / ZM4 / CP4).